The following is a 101-amino-acid chain: Small ribosomal subunit protein uS14 (101 aa).

It belongs to the universal ribosomal protein uS14 family. In terms of assembly, part of the 30S ribosomal subunit. Contacts proteins S3 and S10.

Binds 16S rRNA, required for the assembly of 30S particles and may also be responsible for determining the conformation of the 16S rRNA at the A site. The protein is Small ribosomal subunit protein uS14 of Aliivibrio fischeri (strain MJ11) (Vibrio fischeri).